The primary structure comprises 428 residues: Probable mitochondrial adenine nucleotide transporter BTL3 (428 aa).

3 Solcar repeats span residues 129-212 (LNTT…YRGQ), 222-307 (TTNF…LKSA), and 336-421 (LGPM…MKVV). The next 6 membrane-spanning stretches (helical) occupy residues 132-152 (TKHL…IAPL), 187-207 (GNLV…YAYD), 228-248 (FVAG…LDTI), 283-303 (LVPS…VYDI), 342-362 (LLYG…FEVV), and 390-410 (VPAL…SAAI).

This sequence belongs to the mitochondrial carrier (TC 2.A.29) family.

The protein localises to the mitochondrion inner membrane. Its function is as follows. Probable mitochondrial adenylate carrier that catalyzes the transport of ATP, ADP and AMP. The sequence is that of Probable mitochondrial adenine nucleotide transporter BTL3 from Arabidopsis thaliana (Mouse-ear cress).